Consider the following 231-residue polypeptide: Lipid A acyltransferase PagP (231 aa).

An N-terminal signal peptide occupies residues 1–23 (MNKLTVRNFIVGLLIVFSLNSFS). Residues 24–43 (SPPSISNSSSNSIDENSPIN) show a composition bias toward low complexity. The interval 24–59 (SPPSISNSSSNSIDENSPINTFKISPDNQTSKKSDL) is disordered. Catalysis depends on residues His100, Asp145, and Ser146.

This sequence belongs to the lipid A palmitoyltransferase family. In terms of assembly, homodimer.

Its subcellular location is the cell outer membrane. It catalyses the reaction a lipid A + a 1,2-diacyl-sn-glycero-3-phosphocholine = a hepta-acyl lipid A + a 2-acyl-sn-glycero-3-phosphocholine. It carries out the reaction a lipid IVA + a 1,2-diacyl-sn-glycero-3-phosphocholine = a lipid IVB + a 2-acyl-sn-glycero-3-phosphocholine. The catalysed reaction is a lipid IIA + a 1,2-diacyl-sn-glycero-3-phosphocholine = a lipid IIB + a 2-acyl-sn-glycero-3-phosphocholine. Transfers a fatty acid residue from the sn-1 position of a phospholipid to the N-linked hydroxyfatty acid chain on the proximal unit of lipid A or its precursors. The sequence is that of Lipid A acyltransferase PagP from Legionella longbeachae serogroup 1 (strain NSW150).